Reading from the N-terminus, the 872-residue chain is Armadillo repeat-containing protein 3 (872 aa).

ARM repeat units lie at residues 15–54 (DVFDPLMIESKKAATVVLMLNSPEEEILAKACEAIYKFAL), 57–96 (EENKTTLLELGAVEPLTKLLTHEDKIVRRNATMIFGILAS), 98–138 (NDVK…NMSA), 140–179 (YTSKVQIFEHGGLEPLIRLLSSPDPDVKKNSMECIYNLVQ), 181–220 (FQCRAKLQELNAIPPILDLLKSEYPVIQLLALKTLGVIAN), 222–262 (KESR…NCLE), 264–304 (MDTM…KAAY), 306–345 (PENRKLFHEQEVEKCLVALLGSENDGTKIAASQAISAMCE), 346–385 (NSGSKDFFNNQGIPQLIQLLKSDNEEVREAAALALANLTT), 388–427 (PANANAAAEADGIDPLINLLSSKRDGAIANAATVLTNMAM), 429–468 (EPLRLNIQNHDIMHAIISPLRSANTVVQSKAALAVTATAC), and 470–509 (VEARTELRNSGGLEPLVELLRSKNDEVRKHASWAVMVCAG). S-palmitoyl cysteine attachment occurs at residues Cys507 and Cys518. Positions 610 to 693 (VSPPSSMEDK…SKGKKEEEKV (84 aa)) are disordered. Residues 626–635 (RSISSSSSLR) are compositionally biased toward low complexity. The span at 636-646 (RSSKEKNKKNS) shows a compositional bias: basic residues. The segment covering 675–693 (ATKEKGWRKSKGKKEEEKV) has biased composition (basic and acidic residues).

Homodimer. Interacts with PIK3C3, PIK3R4 and BECN1. Interacts (via ARM domains) with ATG14. Post-translationally, palmitoylation is important for its function in autophagy. In terms of tissue distribution, expressed in skeletal muscle, brain, lung, kidney, prostate and testis. Mainly expressed in skeletal muscle, liver, spleen and thymus. As to expression, expressed only in the testis among normal tissues but is expressed frequently in various cancer tissues and, particularly, in pancreatic, lung and endometrial cancers.

Its function is as follows. Essential for male fertility and sperm motility. During spermatogenesis, promotes the autophagic degradation of excessive ribosomes, providing energy resources for mitochondria and thus ensuring sperm flagellar motility. The polypeptide is Armadillo repeat-containing protein 3 (ARMC3) (Homo sapiens (Human)).